A 177-amino-acid polypeptide reads, in one-letter code: Bifunctional protein PyrR (177 aa).

Residues I101 to T113 carry the PRPP-binding motif.

This sequence belongs to the purine/pyrimidine phosphoribosyltransferase family. PyrR subfamily.

The enzyme catalyses UMP + diphosphate = 5-phospho-alpha-D-ribose 1-diphosphate + uracil. Functionally, regulates the transcription of the pyrimidine nucleotide (pyr) operon in response to exogenous pyrimidines. Its function is as follows. Also displays a weak uracil phosphoribosyltransferase activity which is not physiologically significant. This chain is Bifunctional protein PyrR, found in Endomicrobium trichonymphae.